The following is a 389-amino-acid chain: Leucine aminopeptidase 1 (389 aa).

The signal sequence occupies residues 1–18 (MKSAALLLPLYTAAFAAA). A propeptide spanning residues 19–89 (AFHHEHAQAV…TLNHRINAES (71 aa)) is cleaved from the precursor. Asn-99, Asn-146, and Asn-156 each carry an N-linked (GlcNAc...) asparagine glycan. Zn(2+) contacts are provided by His-188, Asp-207, Glu-246, and Asp-273. A disulfide bridge links Cys-322 with Cys-326. His-355 is a Zn(2+) binding site.

The protein belongs to the peptidase M28 family. M28E subfamily. In terms of assembly, monomer. It depends on Zn(2+) as a cofactor.

Its subcellular location is the secreted. Extracellular aminopeptidase that allows assimilation of proteinaceous substrates. This chain is Leucine aminopeptidase 1 (lap1), found in Pyrenophora tritici-repentis (strain Pt-1C-BFP) (Wheat tan spot fungus).